A 503-amino-acid chain; its full sequence is Cobyric acid synthase (503 aa).

Residues 251–450 (DLDIAVIRLP…IHGIFENAAF (200 aa)) enclose the GATase cobBQ-type domain. Residue Cys-331 is the Nucleophile of the active site. Residue His-442 is part of the active site.

It belongs to the CobB/CobQ family. CobQ subfamily.

It functions in the pathway cofactor biosynthesis; adenosylcobalamin biosynthesis. In terms of biological role, catalyzes amidations at positions B, D, E, and G on adenosylcobyrinic A,C-diamide. NH(2) groups are provided by glutamine, and one molecule of ATP is hydrogenolyzed for each amidation. In Dehalococcoides mccartyi (strain CBDB1), this protein is Cobyric acid synthase.